A 473-amino-acid polypeptide reads, in one-letter code: Photosystem II CP43 reaction center protein (473 aa).

Positions 1–14 (MKTLYSLRRSYPVE) are excised as a propeptide. Thr15 carries the post-translational modification N-acetylthreonine. Thr15 is subject to Phosphothreonine. 5 helical membrane passes run 69-93 (LFEV…PHLA), 134-155 (LIGP…KDRN), 178-200 (KALY…RKIT), 255-275 (KPFA…LSYS), and 291-312 (WFNN…ASQA). Residue Glu367 coordinates [CaMn4O5] cluster. A helical membrane pass occupies residues 447–471 (RARAAAAGFEKGIDRDFEPVLSMTP).

It belongs to the PsbB/PsbC family. PsbC subfamily. As to quaternary structure, PSII is composed of 1 copy each of membrane proteins PsbA, PsbB, PsbC, PsbD, PsbE, PsbF, PsbH, PsbI, PsbJ, PsbK, PsbL, PsbM, PsbT, PsbX, PsbY, PsbZ, Psb30/Ycf12, at least 3 peripheral proteins of the oxygen-evolving complex and a large number of cofactors. It forms dimeric complexes. The cofactor is Binds multiple chlorophylls and provides some of the ligands for the Ca-4Mn-5O cluster of the oxygen-evolving complex. It may also provide a ligand for a Cl- that is required for oxygen evolution. PSII binds additional chlorophylls, carotenoids and specific lipids..

The protein localises to the plastid. It is found in the chloroplast thylakoid membrane. One of the components of the core complex of photosystem II (PSII). It binds chlorophyll and helps catalyze the primary light-induced photochemical processes of PSII. PSII is a light-driven water:plastoquinone oxidoreductase, using light energy to abstract electrons from H(2)O, generating O(2) and a proton gradient subsequently used for ATP formation. This is Photosystem II CP43 reaction center protein from Pinus koraiensis (Korean pine).